Consider the following 503-residue polypeptide: E3 ubiquitin-protein ligase IE61 (503 aa).

The segment at 19–58 (CAICMSAISGLGKTLPCLHDFCFVCIQTWTSTSAQCPLCR) adopts an RING-type zinc-finger fold. Disordered regions lie at residues 175–194 (AVITPTTSTGPRLHLSPSSR), 367–418 (SGPI…LFVD), and 445–503 (AALP…VRRK). Polar residues predominate over residues 375–388 (GGSTSQDTSVSNIH). Positions 389–403 (RSPPGGSSTQPSSGR) are enriched in low complexity. Over residues 404-414 (RPGRPKGVKRR) the composition is skewed to basic residues. A compositionally biased stretch (low complexity) spans 471–480 (PSTSGSSPSP).

In terms of assembly, interacts with host BTRC; this interaction seems to inactivate SCF-mediated protein degradation in general.

The catalysed reaction is S-ubiquitinyl-[E2 ubiquitin-conjugating enzyme]-L-cysteine + [acceptor protein]-L-lysine = [E2 ubiquitin-conjugating enzyme]-L-cysteine + N(6)-ubiquitinyl-[acceptor protein]-L-lysine.. In terms of biological role, RING-finger E3 ubiquitin ligase that degrades host SP100, one of the major components of ND10 nuclear bodies, thereby disrupting the organization of these bodies. Also plays a role in the inhibition of host NF-kappa-B pathway by blocking the SCF(BTRC)-mediated addition of ubiquitin chains to host IkappaBalpha/NFKBIA, thereby interfering with its degradation. The chain is E3 ubiquitin-protein ligase IE61 from Cercopithecine herpesvirus 9 (strain DHV) (CeHV-9).